The chain runs to 152 residues: Histone H2B.9 (152 aa).

2 stretches are compositionally biased toward basic and acidic residues: residues 1–16 (MAPK…KPAE) and 34–52 (EKRL…EGKK). A disordered region spans residues 1-59 (MAPKAEKKPAAKKPAEEEPAAEKAPAAGKKPKAEKRLPAGKGEKGGAGEGKKAGRKKGK). N6-acetyllysine occurs at positions 7 and 35. Lysine 148 participates in a covalent cross-link: Glycyl lysine isopeptide (Lys-Gly) (interchain with G-Cter in ubiquitin).

It belongs to the histone H2B family. The nucleosome is a histone octamer containing two molecules each of H2A, H2B, H3 and H4 assembled in one H3-H4 heterotetramer and two H2A-H2B heterodimers. The octamer wraps approximately 147 bp of DNA. Can be acetylated to form H2BK6ac and H2BK33ac. Post-translationally, monoubiquitinated by BRE1 to form H2BK143ub1 and deubiquitinated by UBP26. Required for heterochromatic histone H3 di- and trimethylation at H3K4me. May give a specific tag for epigenetic transcriptional activation.

It is found in the nucleus. It localises to the chromosome. In terms of biological role, core component of nucleosome. Nucleosomes wrap and compact DNA into chromatin, limiting DNA accessibility to the cellular machineries which require DNA as a template. Histones thereby play a central role in transcription regulation, DNA repair, DNA replication and chromosomal stability. DNA accessibility is regulated via a complex set of post-translational modifications of histones, also called histone code, and nucleosome remodeling. The chain is Histone H2B.9 (H2B.9) from Oryza sativa subsp. indica (Rice).